Reading from the N-terminus, the 315-residue chain is tRNA dimethylallyltransferase (315 aa).

An ATP-binding site is contributed by 11-18 (GPTASGKS). 13–18 (TASGKS) contributes to the substrate binding site. Interaction with substrate tRNA stretches follow at residues 36-39 (DSMQ) and 160-164 (QRLIR).

This sequence belongs to the IPP transferase family. In terms of assembly, monomer. Mg(2+) is required as a cofactor.

The enzyme catalyses adenosine(37) in tRNA + dimethylallyl diphosphate = N(6)-dimethylallyladenosine(37) in tRNA + diphosphate. Catalyzes the transfer of a dimethylallyl group onto the adenine at position 37 in tRNAs that read codons beginning with uridine, leading to the formation of N6-(dimethylallyl)adenosine (i(6)A). This Rickettsia bellii (strain OSU 85-389) protein is tRNA dimethylallyltransferase.